The primary structure comprises 240 residues: Pyridoxine 5'-phosphate synthase (240 aa).

N7 contacts 3-amino-2-oxopropyl phosphate. 9–10 (DH) provides a ligand contact to 1-deoxy-D-xylulose 5-phosphate. R18 lines the 3-amino-2-oxopropyl phosphate pocket. H43 (proton acceptor) is an active-site residue. R45 and H50 together coordinate 1-deoxy-D-xylulose 5-phosphate. Catalysis depends on E70, which acts as the Proton acceptor. Residue T100 coordinates 1-deoxy-D-xylulose 5-phosphate. The active-site Proton donor is H191. 3-amino-2-oxopropyl phosphate contacts are provided by residues G192 and 213 to 214 (GH).

The protein belongs to the PNP synthase family. In terms of assembly, homooctamer; tetramer of dimers.

The protein resides in the cytoplasm. The enzyme catalyses 3-amino-2-oxopropyl phosphate + 1-deoxy-D-xylulose 5-phosphate = pyridoxine 5'-phosphate + phosphate + 2 H2O + H(+). Its pathway is cofactor biosynthesis; pyridoxine 5'-phosphate biosynthesis; pyridoxine 5'-phosphate from D-erythrose 4-phosphate: step 5/5. Its function is as follows. Catalyzes the complicated ring closure reaction between the two acyclic compounds 1-deoxy-D-xylulose-5-phosphate (DXP) and 3-amino-2-oxopropyl phosphate (1-amino-acetone-3-phosphate or AAP) to form pyridoxine 5'-phosphate (PNP) and inorganic phosphate. The chain is Pyridoxine 5'-phosphate synthase from Cyanothece sp. (strain PCC 7425 / ATCC 29141).